Here is a 527-residue protein sequence, read N- to C-terminus: MERQEKANNAGHMVDVVVIGGGISGLSAAKLLNEYGINVLVLEARDRVGGRTYTVRNENVDYVDVGGAYVGPTQNRILRLSKELGLETYKVNVNECLVQYVKGKSYPFRGAFPPVWNPIAYLDYNNLWRTMDDMGKKIPADAPWESPHAEEWDKMTMKDLIDKICWTKTAKRFASLFVNINVTSEPHEVSALWFLWYVKQCGGTTRIFSVTNGGQERKFVGGSGQVSERIMHLLGDRVKLRCPVTYVDQSGDNIIVETLNHELYECQYVISAIPPTLTAKIHFRPELPSERNQLIQRLPMGAIIKCMMYYKEAFWKKKNYCGCMIIEDEEAPISITLDDTKPDGSLPAIMGFILARKADRLAKVHKEVRKRKICELYAKVLGSQEASHPVHYEEKNWCEEQYSGGCYTAYFPPGIMTQYGRVIRQPVGRIFFAGTETATQWSGYMEGAVEAGERAAREILNALGKVSKKDIWLREPESEDVPAFEITRTFWERNLPSVTGLLKIIGFSTSVTALWLAVYKFRLLTRS.

At Met-1 the chain carries N-acetylmethionine. Topologically, residues 1-497 (MERQEKANNA…RTFWERNLPS (497 aa)) are cytoplasmic. Ser-383 bears the Phosphoserine mark. Cys-406 carries the post-translational modification S-8alpha-FAD cysteine. Residues 498-518 (VTGLLKIIGFSTSVTALWLAV) form a helical; Anchor for type IV membrane protein membrane-spanning segment. Residues 519 to 527 (YKFRLLTRS) are Mitochondrial intermembrane-facing. The segment at 520-522 (KFR) is interaction with membrane phospholipid headgroups.

Belongs to the flavin monoamine oxidase family. In terms of assembly, monomer, homo- or heterodimer (containing two subunits of similar size). Each subunit contains a covalently bound flavin. Enzymatically active as monomer. It depends on FAD as a cofactor.

The protein localises to the mitochondrion outer membrane. The enzyme catalyses a secondary aliphatic amine + O2 + H2O = a primary amine + an aldehyde + H2O2. The catalysed reaction is a primary methyl amine + O2 + H2O = an aldehyde + H2O2 + NH4(+). It carries out the reaction (R)-adrenaline + O2 + H2O = (R)-3,4-dihydroxymandelaldehyde + methylamine + H2O2. It catalyses the reaction dopamine + O2 + H2O = 3,4-dihydroxyphenylacetaldehyde + H2O2 + NH4(+). The enzyme catalyses tyramine + O2 + H2O = (4-hydroxyphenyl)acetaldehyde + H2O2 + NH4(+). The catalysed reaction is (R)-noradrenaline + O2 + H2O = (R)-3,4-dihydroxymandelaldehyde + H2O2 + NH4(+). It carries out the reaction serotonin + O2 + H2O = (5-hydroxyindol-3-yl)acetaldehyde + H2O2 + NH4(+). It catalyses the reaction kynuramine + O2 + H2O = 3-(2-aminophenyl)-3-oxopropanal + H2O2 + NH4(+). The enzyme catalyses tryptamine + O2 + H2O = indole-3-acetaldehyde + H2O2 + NH4(+). The catalysed reaction is 2-phenylethylamine + O2 + H2O = 2-phenylacetaldehyde + H2O2 + NH4(+). Its function is as follows. Catalyzes the oxidative deamination of primary and some secondary amine such as neurotransmitters, with concomitant reduction of oxygen to hydrogen peroxide and has important functions in the metabolism of neuroactive and vasoactive amines in the central nervous system and peripheral tissues. Preferentially oxidizes serotonin. Also catalyzes the oxidative deamination of kynuramine to 3-(2-aminophenyl)-3-oxopropanal that can spontaneously condense to 4-hydroxyquinoline. In Sus scrofa (Pig), this protein is Amine oxidase [flavin-containing] A.